Consider the following 611-residue polypeptide: Protein PES4 (611 aa).

The segment at 37–81 is disordered; the sequence is FNPVVTPIRPDDYHEKTSRSSSSSHSDSPEFLRINNNKSGHKNGK. Over residues 45-54 the composition is skewed to basic and acidic residues; that stretch reads RPDDYHEKTS. RRM domains are found at residues 91–169, 179–247, 303–379, and 393–471; these read VPLF…PSLR, TNVF…GKKI, NSIF…RAQD, and STLF…WERQ.

The protein localises to the nucleus. In Saccharomyces cerevisiae (strain ATCC 204508 / S288c) (Baker's yeast), this protein is Protein PES4 (PES4).